The sequence spans 524 residues: Excitatory amino acid transporter 3 (524 aa).

Over 1–18 (MGKPARKGCDSKRFLKNN) the chain is Cytoplasmic. A helical membrane pass occupies residues 19–38 (WLLLSTVVAVVLGIVIGVLV). Over 39–61 (REYSNLSTLDKFYFAFPGEILMR) the chain is Extracellular. An N-linked (GlcNAc...) asparagine glycan is attached at Asn-43. A helical transmembrane segment spans residues 62–82 (MLKLVILPLIVSSMITGVAAL). At 83–93 (DSNVSGKIGLR) the chain is on the cytoplasmic side. The chain crosses the membrane as a helical span at residues 94–114 (AVLYYFCTTIIAVILGIVLVV). The Na(+) site is built by Tyr-98, Thr-101, and Thr-102. Over 115-205 (SIKPGVTQKV…RTKEYRVVGL (91 aa)) the chain is Extracellular. 2 N-linked (GlcNAc...) asparagine glycosylation sites follow: Asn-178 and Asn-195. Residues 206 to 229 (YSDGINVLGLIVFCLVFGLVIGKM) form a helical membrane-spanning segment. The Cytoplasmic portion of the chain corresponds to 230–238 (GEKGQILVD). A helical transmembrane segment spans residues 239–266 (FFNALSDATMKIVQIIMCYMPLGILFLI). Topologically, residues 267–286 (AGKIIEVEDWEIFRKLGLYM) are extracellular. A helical transmembrane segment spans residues 287-308 (VTVLSGLAIHSIVILPLIYFIV). Topologically, residues 309 to 313 (VRKNP) are cytoplasmic. An intramembrane region (discontinuously helical) is located at residues 314 to 344 (FRFAMGMTQALLTALMISSSSATLPVTFRCA). 2 residues coordinate L-aspartate: Ser-331 and Ser-333. The Cytoplasmic portion of the chain corresponds to 345–353 (EEKNRVDKR). A helical membrane pass occupies residues 354–380 (ITRFVLPVGATINMDGTALYEAVAAVF). Residues Gly-362, Thr-364, Asn-366, and Asp-368 each coordinate Na(+). Thr-370 provides a ligand contact to L-aspartate. Residues 381-393 (IAQLNDMDLSIGQ) lie on the Extracellular side of the membrane. Residues 394-427 (IITISVTATAASIGAAGVPQAGLVTMVIVLSAVG) constitute an intramembrane region (discontinuously helical). Residues Ser-405, Ile-406, and Ala-408 each contribute to the Na(+) site. Val-411 is a binding site for L-aspartate. Residues 428–440 (LPAEDVTLIIAVD) are Extracellular-facing. Residues 441 to 462 (WLLDRFRTVVNVLGDAFGTGIV) traverse the membrane as a helical segment. L-aspartate-binding residues include Arg-447, Thr-448, and Asn-451. Na(+) contacts are provided by Asn-451 and Asp-455. Over 463-524 (EKLSKKELEQ…TISFTQTSQF (62 aa)) the chain is Cytoplasmic. Phosphoserine occurs at positions 517 and 522.

This sequence belongs to the dicarboxylate/amino acid:cation symporter (DAACS) (TC 2.A.23) family. SLC1A1 subfamily. In terms of assembly, homotrimer. Interacts with ARL6IP5. Interacts with RTN2 (via N-terminus); the interaction promotes cell surface expression of SLC1A1. Interacts with SORCS2; this interaction is important for normal expression at the cell membrane. Brain, but also small intestine, kidney, liver and heart.

The protein resides in the cell membrane. The protein localises to the apical cell membrane. Its subcellular location is the synapse. It localises to the synaptosome. It is found in the early endosome membrane. The protein resides in the late endosome membrane. The protein localises to the recycling endosome membrane. It carries out the reaction K(+)(in) + L-glutamate(out) + 3 Na(+)(out) + H(+)(out) = K(+)(out) + L-glutamate(in) + 3 Na(+)(in) + H(+)(in). The catalysed reaction is K(+)(in) + L-aspartate(out) + 3 Na(+)(out) + H(+)(out) = K(+)(out) + L-aspartate(in) + 3 Na(+)(in) + H(+)(in). The enzyme catalyses D-aspartate(out) + K(+)(in) + 3 Na(+)(out) + H(+)(out) = D-aspartate(in) + K(+)(out) + 3 Na(+)(in) + H(+)(in). It catalyses the reaction K(+)(in) + L-cysteine(out) + 3 Na(+)(out) + H(+)(out) = K(+)(out) + L-cysteine(in) + 3 Na(+)(in) + H(+)(in). In terms of biological role, sodium-dependent, high-affinity amino acid transporter that mediates the uptake of L-glutamate and also L-aspartate and D-aspartate. Can also transport L-cysteine. Functions as a symporter that transports one amino acid molecule together with two or three Na(+) ions and one proton, in parallel with the counter-transport of one K(+) ion. Mediates Cl(-) flux that is not coupled to amino acid transport; this avoids the accumulation of negative charges due to aspartate and Na(+) symport. Plays an important role in L-glutamate and L-aspartate reabsorption in renal tubuli. Plays a redundant role in the rapid removal of released glutamate from the synaptic cleft, which is essential for terminating the postsynaptic action of glutamate. Contributes to glutathione biosynthesis and protection against oxidative stress via its role in L-glutamate and L-cysteine transport. Negatively regulated by ARL6IP5. In Oryctolagus cuniculus (Rabbit), this protein is Excitatory amino acid transporter 3 (SLC1A1).